A 518-amino-acid chain; its full sequence is Cyclin-L2 (518 aa).

Cyclin-like stretches follow at residues 81–183 (ELIQ…RVLK) and 196–280 (KIIV…KILQ). The disordered stretch occupies residues 310–518 (AKGLLPGTAP…DHPGHSRHRR (209 aa)). Phosphoserine is present on residues S328, S335, S345, S348, and S366. An RS region spans residues 382–420 (RSREQSYSRSPSRSASPKRRKSDSGSTSGGSKSQSRSRS). The segment covering 405-427 (SGSTSGGSKSQSRSRSRSDSPPR) has biased composition (low complexity). Positions 438 to 450 (SEVRGSRKSKDCK) are enriched in basic and acidic residues. The segment covering 455-469 (KPHKSRSRSSSRSRS) has biased composition (basic residues). 2 stretches are compositionally biased toward basic and acidic residues: residues 470–479 (RSRERTDNSG) and 487–512 (YYRD…DHPG).

It belongs to the cyclin family. Cyclin L subfamily. In terms of assembly, interacts with CDK11A, CDK11B, CDK12, CDK13 and POLR2A, the hyperphosphorylated C-terminal domain (CTD) of RNA polymerase II. May form a ternary complex with CDK11B and casein kinase II (CKII). Interacts with pre-mRNA-splicing factors, including at least SRSF1, SRSF2 and SRSF7/SLU7. Widely expressed (at protein level).

The protein localises to the nucleus speckle. The protein resides in the nucleus. It localises to the nucleoplasm. Its function is as follows. Involved in pre-mRNA splicing. May induce cell death, possibly by acting on the transcription and RNA processing of apoptosis-related factors. The chain is Cyclin-L2 (Ccnl2) from Mus musculus (Mouse).